A 285-amino-acid polypeptide reads, in one-letter code: MILLDGKSLAEKIKNQIKQEIDQLTQKGYRQPVLSVILVGENPASQIYVNKKIKDCASVGIKSKPFFLPENITQTELLELIGDLNGDEEVDGILVQLPLPSHINTLEIIEAINPYKDVDGFHPINVGKLATGRNDAILPCTPYGIMKLLHEYNIDHFGKDVVVVGASNIVGKPMSLLFLKDEKSTVTICHKNTKDLKSHTLKADILVVAVGKPKLITEDMVKEGAVVIDVGINRVDGKIVGDVDFENVKKKAYAITPVPGGVGPMTVAMLLYNTLEIYKRKLIEI.

NADP(+) is bound by residues 165 to 167 (GAS) and I232.

This sequence belongs to the tetrahydrofolate dehydrogenase/cyclohydrolase family. Homodimer.

The catalysed reaction is (6R)-5,10-methylene-5,6,7,8-tetrahydrofolate + NADP(+) = (6R)-5,10-methenyltetrahydrofolate + NADPH. The enzyme catalyses (6R)-5,10-methenyltetrahydrofolate + H2O = (6R)-10-formyltetrahydrofolate + H(+). It participates in one-carbon metabolism; tetrahydrofolate interconversion. Catalyzes the oxidation of 5,10-methylenetetrahydrofolate to 5,10-methenyltetrahydrofolate and then the hydrolysis of 5,10-methenyltetrahydrofolate to 10-formyltetrahydrofolate. The sequence is that of Bifunctional protein FolD from Sulfurihydrogenibium sp. (strain YO3AOP1).